A 415-amino-acid polypeptide reads, in one-letter code: Homoserine O-succinyltransferase (415 aa).

In terms of domain architecture, AB hydrolase-1 spans 69 to 383 (NAVLVCHALN…PHGHDAFLLD (315 aa)). Ser-175 (nucleophile) is an active-site residue. Arg-245 provides a ligand contact to substrate. Catalysis depends on residues Asp-344 and His-377. Asp-378 provides a ligand contact to substrate.

The protein belongs to the AB hydrolase superfamily. MetX family. In terms of assembly, homodimer.

The protein resides in the cytoplasm. It carries out the reaction L-homoserine + succinyl-CoA = O-succinyl-L-homoserine + CoA. It participates in amino-acid biosynthesis; L-methionine biosynthesis via de novo pathway; O-succinyl-L-homoserine from L-homoserine: step 1/1. In terms of biological role, transfers a succinyl group from succinyl-CoA to L-homoserine, forming succinyl-L-homoserine. The chain is Homoserine O-succinyltransferase from Bordetella parapertussis (strain 12822 / ATCC BAA-587 / NCTC 13253).